A 733-amino-acid chain; its full sequence is Polyribonucleotide nucleotidyltransferase (733 aa).

The disordered stretch occupies residues Asn404–Arg424. Mg(2+) is bound by residues Asp516 and Asp522. Residues Pro582–Ile641 form the KH domain. The S1 motif domain maps to Gly653 to Ala725.

It belongs to the polyribonucleotide nucleotidyltransferase family. Requires Mg(2+) as cofactor.

It is found in the cytoplasm. It carries out the reaction RNA(n+1) + phosphate = RNA(n) + a ribonucleoside 5'-diphosphate. In terms of biological role, involved in mRNA degradation. Catalyzes the phosphorolysis of single-stranded polyribonucleotides processively in the 3'- to 5'-direction. This chain is Polyribonucleotide nucleotidyltransferase, found in Cutibacterium acnes (strain DSM 16379 / KPA171202) (Propionibacterium acnes).